The sequence spans 500 residues: Aspartyl/glutamyl-tRNA(Asn/Gln) amidotransferase subunit B (500 aa).

The protein belongs to the GatB/GatE family. GatB subfamily. In terms of assembly, heterotrimer of A, B and C subunits.

It catalyses the reaction L-glutamyl-tRNA(Gln) + L-glutamine + ATP + H2O = L-glutaminyl-tRNA(Gln) + L-glutamate + ADP + phosphate + H(+). The enzyme catalyses L-aspartyl-tRNA(Asn) + L-glutamine + ATP + H2O = L-asparaginyl-tRNA(Asn) + L-glutamate + ADP + phosphate + 2 H(+). Allows the formation of correctly charged Asn-tRNA(Asn) or Gln-tRNA(Gln) through the transamidation of misacylated Asp-tRNA(Asn) or Glu-tRNA(Gln) in organisms which lack either or both of asparaginyl-tRNA or glutaminyl-tRNA synthetases. The reaction takes place in the presence of glutamine and ATP through an activated phospho-Asp-tRNA(Asn) or phospho-Glu-tRNA(Gln). The sequence is that of Aspartyl/glutamyl-tRNA(Asn/Gln) amidotransferase subunit B from Clavibacter michiganensis subsp. michiganensis (strain NCPPB 382).